The chain runs to 354 residues: Rhodopsin (354 aa).

Over M1 to K36 the chain is Extracellular. Residues N2 and N15 are each glycosylated (N-linked (GlcNAc...) asparagine). The helical transmembrane segment at F37–V61 threads the bilayer. Topologically, residues T62 to N73 are cytoplasmic. Residues Y74 to I96 traverse the membrane as a helical segment. Topologically, residues T97 to C110 are extracellular. The cysteines at positions 110 and 187 are disulfide-linked. The chain crosses the membrane as a helical span at residues N111–I133. Positions E134 to Y136 match the 'Ionic lock' involved in activated form stabilization motif. Residues E134–H152 lie on the Cytoplasmic side of the membrane. The chain crosses the membrane as a helical span at residues A153 to V173. Residues G174–S202 are Extracellular-facing. A glycan (N-linked (GlcNAc...) asparagine) is linked at N200. Residues F203–G224 form a helical membrane-spanning segment. Residues R225–R252 lie on the Cytoplasmic side of the membrane. The chain crosses the membrane as a helical span at residues M253–F274. At I275–I286 the chain is on the extracellular side. Residues F287–L308 traverse the membrane as a helical segment. K296 is subject to N6-(retinylidene)lysine. Residues M309–A354 are Cytoplasmic-facing. S-palmitoyl cysteine attachment occurs at residues C322 and C323. Positions S333–A354 are disordered. Residues T334–A354 are compositionally biased toward low complexity.

Belongs to the G-protein coupled receptor 1 family. Opsin subfamily. In terms of processing, phosphorylated on some or all of the serine and threonine residues present in the C-terminal region. Post-translationally, contains one covalently linked retinal chromophore.

It is found in the membrane. It localises to the cell projection. Its subcellular location is the cilium. The protein resides in the photoreceptor outer segment. Photoreceptor required for image-forming vision at low light intensity. While most salt water fish species use retinal as chromophore, most freshwater fish use 3-dehydroretinal, or a mixture of retinal and 3-dehydroretinal. Light-induced isomerization of 11-cis to all-trans retinal triggers a conformational change that activates signaling via G-proteins. Subsequent receptor phosphorylation mediates displacement of the bound G-protein alpha subunit by arrestin and terminates signaling. The protein is Rhodopsin (rho) of Scyliorhinus canicula (Small-spotted catshark).